A 176-amino-acid chain; its full sequence is MTTIVSVRRHGKVVMAGDGQVSLGNTVMKGNAKKVRRLYHGEVIAGFAGATADAFTLFERFEAQLEKHQGHLVRAAVELAKDWRTDRSLSRLEAMLAVANKDASLIITGNGDVVEPEDGLIAMGSGGAFAQAAARALLLKTDLSAREIAETSLHIAGDICVFTNHNITIEEQDLAD.

T2 is an active-site residue. Residues G157, C160, and T163 each contribute to the Na(+) site.

This sequence belongs to the peptidase T1B family. HslV subfamily. In terms of assembly, a double ring-shaped homohexamer of HslV is capped on each side by a ring-shaped HslU homohexamer. The assembly of the HslU/HslV complex is dependent on binding of ATP.

The protein localises to the cytoplasm. The catalysed reaction is ATP-dependent cleavage of peptide bonds with broad specificity.. With respect to regulation, allosterically activated by HslU binding. Functionally, protease subunit of a proteasome-like degradation complex believed to be a general protein degrading machinery. This chain is ATP-dependent protease subunit HslV, found in Pseudomonas syringae pv. tomato (strain ATCC BAA-871 / DC3000).